The following is a 306-amino-acid chain: Ribonuclease BN (306 aa).

Zn(2+) contacts are provided by histidine 64, histidine 66, aspartate 68, histidine 69, histidine 141, aspartate 212, and histidine 270. Catalysis depends on aspartate 68, which acts as the Proton acceptor.

This sequence belongs to the RNase Z family. RNase BN subfamily. Homodimer. The cofactor is Zn(2+).

In terms of biological role, zinc phosphodiesterase, which has both exoribonuclease and endoribonuclease activities. This chain is Ribonuclease BN, found in Klebsiella pneumoniae (strain 342).